The following is a 420-amino-acid chain: 2-(3-amino-3-carboxypropyl)histidine synthase subunit 1 (420 aa).

[4Fe-4S] cluster-binding residues include cysteine 127, cysteine 233, and cysteine 362.

Belongs to the DPH1/DPH2 family. DPH1 subfamily. Component of the 2-(3-amino-3-carboxypropyl)histidine synthase complex composed of DPH1, DPH2, DPH3 and a NADH-dependent reductase, predominantly CBR1. [4Fe-4S] cluster serves as cofactor.

Its subcellular location is the cytoplasm. It carries out the reaction L-histidyl-[translation elongation factor 2] + S-adenosyl-L-methionine = 2-[(3S)-amino-3-carboxypropyl]-L-histidyl-[translation elongation factor 2] + S-methyl-5'-thioadenosine + H(+). It functions in the pathway protein modification; peptidyl-diphthamide biosynthesis. Catalyzes the first step of diphthamide biosynthesis, a post-translational modification of histidine which occurs in elongation factor 2. DPH1 and DPH2 transfer a 3-amino-3-carboxypropyl (ACP) group from S-adenosyl-L-methionine (SAM) to a histidine residue, the reaction is assisted by a reduction system comprising DPH3 and a NADH-dependent reductase, predominantly CBR1. This chain is 2-(3-amino-3-carboxypropyl)histidine synthase subunit 1 (DPH1), found in Debaryomyces hansenii (strain ATCC 36239 / CBS 767 / BCRC 21394 / JCM 1990 / NBRC 0083 / IGC 2968) (Yeast).